Here is a 312-residue protein sequence, read N- to C-terminus: Olfactory receptor 6C1 (312 aa).

Residues 1-23 (MRNHTEITEFILLGLTDDPNFQV) lie on the Extracellular side of the membrane. N3 carries N-linked (GlcNAc...) asparagine glycosylation. Residues 24–44 (VIFVFLLITYMLSITGNLTLI) traverse the membrane as a helical segment. At 45–52 (TITLLDSH) the chain is on the cytoplasmic side. Residues 53–73 (LQTPMYFFLRNFSILEISFTT) form a helical membrane-spanning segment. Topologically, residues 74–97 (VSIPKFLGNIISGDKTISFNNCIV) are extracellular. C95 and C187 are joined by a disulfide. The chain crosses the membrane as a helical span at residues 98–118 (QLFFFILLGVTEFYLLAAMSY). Residues 119–137 (DRYVAICKPLHCLSIMNRR) lie on the Cytoplasmic side of the membrane. The helical transmembrane segment at 138–158 (VCTLLVFTSWLVSFLIIFPAL) threads the bilayer. Residues 159-195 (MLLLKLHYCRSNIIDHFTCDYFPLLQLACSDTKFLEV) are Extracellular-facing. Residues 196–215 (MGFSCAAFTLMFTLALIFLS) form a helical membrane-spanning segment. The Cytoplasmic portion of the chain corresponds to 216-235 (YIYIIRTILRIPSTSQRTKA). The helical transmembrane segment at 236–256 (FSTCSSHMVVVSISYGSCIFM) threads the bilayer. Topologically, residues 257 to 269 (YIKPSAKDRVSLS) are extracellular. Residues 270–290 (KGVAILNTSVAPMMNPFIYSL) form a helical membrane-spanning segment. Over 291 to 312 (RNQQVKQAFINMARKTVFFTST) the chain is Cytoplasmic.

Belongs to the G-protein coupled receptor 1 family.

Its subcellular location is the cell membrane. Its function is as follows. Odorant receptor. In Homo sapiens (Human), this protein is Olfactory receptor 6C1 (OR6C1).